The primary structure comprises 260 residues: Ribosomal protein L11 methyltransferase (260 aa).

S-adenosyl-L-methionine contacts are provided by Thr119, Gly140, Asp162, and Asn203.

Belongs to the methyltransferase superfamily. PrmA family.

It localises to the cytoplasm. It catalyses the reaction L-lysyl-[protein] + 3 S-adenosyl-L-methionine = N(6),N(6),N(6)-trimethyl-L-lysyl-[protein] + 3 S-adenosyl-L-homocysteine + 3 H(+). Its function is as follows. Methylates ribosomal protein L11. The polypeptide is Ribosomal protein L11 methyltransferase (Thermosipho africanus (strain TCF52B)).